The primary structure comprises 469 residues: Ribulose bisphosphate carboxylase large chain (469 aa).

Residue lysine 8 is modified to N6,N6,N6-trimethyllysine. Substrate contacts are provided by asparagine 117 and threonine 167. Lysine 169 acts as the Proton acceptor in catalysis. Position 171 (lysine 171) interacts with substrate. Lysine 195, aspartate 197, and glutamate 198 together coordinate Mg(2+). The residue at position 195 (lysine 195) is an N6-carboxylysine. Histidine 288 (proton acceptor) is an active-site residue. The substrate site is built by arginine 289, histidine 321, and serine 373.

This sequence belongs to the RuBisCO large chain family. Type I subfamily. As to quaternary structure, heterohexadecamer of 8 large chains and 8 small chains; disulfide-linked. The disulfide link is formed within the large subunit homodimers. Mg(2+) is required as a cofactor. In terms of processing, the disulfide bond which can form in the large chain dimeric partners within the hexadecamer appears to be associated with oxidative stress and protein turnover.

Its subcellular location is the plastid. The protein resides in the chloroplast. It catalyses the reaction 2 (2R)-3-phosphoglycerate + 2 H(+) = D-ribulose 1,5-bisphosphate + CO2 + H2O. The catalysed reaction is D-ribulose 1,5-bisphosphate + O2 = 2-phosphoglycolate + (2R)-3-phosphoglycerate + 2 H(+). Functionally, ruBisCO catalyzes two reactions: the carboxylation of D-ribulose 1,5-bisphosphate, the primary event in carbon dioxide fixation, as well as the oxidative fragmentation of the pentose substrate in the photorespiration process. Both reactions occur simultaneously and in competition at the same active site. The chain is Ribulose bisphosphate carboxylase large chain from Akania bidwillii (Turnipwood).